The following is a 160-amino-acid chain: Phosphopantetheine adenylyltransferase (160 aa).

Ser9 contributes to the substrate binding site. ATP contacts are provided by residues 9–10 (SF) and His17. Positions 41, 73, and 87 each coordinate substrate. Residues 88–90 (GMR), Glu98, and 123–129 (YTFFSSS) contribute to the ATP site.

It belongs to the bacterial CoaD family. Homohexamer. The cofactor is Mg(2+).

It is found in the cytoplasm. It carries out the reaction (R)-4'-phosphopantetheine + ATP + H(+) = 3'-dephospho-CoA + diphosphate. Its pathway is cofactor biosynthesis; coenzyme A biosynthesis; CoA from (R)-pantothenate: step 4/5. In terms of biological role, reversibly transfers an adenylyl group from ATP to 4'-phosphopantetheine, yielding dephospho-CoA (dPCoA) and pyrophosphate. The sequence is that of Phosphopantetheine adenylyltransferase from Roseiflexus sp. (strain RS-1).